Consider the following 451-residue polypeptide: Cobalamin reductase PduS (451 aa).

4Fe-4S ferredoxin-type domains lie at 255–284 and 300–330; these read TVLSVAKTVCEQCRLCTDLCPRHLIGHELS and PQLLLTALTCSECNVCESVACPVGISPMRIN. Residues Cys-264, Cys-267, Cys-270, Cys-274, Cys-309, Cys-312, Cys-315, and Cys-320 each contribute to the [4Fe-4S] cluster site.

The protein belongs to the PduS cobalamin reductase family. As to quaternary structure, monomer, forms a complex with PduO. Interacts with PduT, probably via the N-terminus of PduS. It depends on [4Fe-4S] cluster as a cofactor. FMN is required as a cofactor.

Its subcellular location is the bacterial microcompartment. Its pathway is polyol metabolism; 1,2-propanediol degradation. Its function is as follows. A bifunctional cobalamin reductase that converts cob(III)alamin to cob(II)alamin and then to cob(I)alamin in the bacterial microcompartment (BMC) dedicated to 1,2-propanediol (1,2-PD) degradation. PduS and PduO allow regeneration of the adenosylcobalamin cofactor within the BMC. Cobalamin reduction probably occurs spontaneously in the presence of free reduced flavin nucleotides, this protein may be involved in electron transfer for this reduction. Expression of a cosmid containing the full 21-gene pdu operon in E.coli allows E.coli to grow on 1,2-propanediol (1,2-PD) with the appearance of BMCs in its cytoplasm. Functionally, the 1,2-PD-specific bacterial microcompartment (BMC) concentrates low levels of 1,2-PD catabolic enzymes, concentrates volatile reaction intermediates thus enhancing pathway flux and keeps the level of toxic, mutagenic propionaldehyde low. In Citrobacter freundii, this protein is Cobalamin reductase PduS.